The chain runs to 331 residues: Zinc finger CW-type PWWP domain protein 2 homolog (331 aa).

The CW-type zinc finger occupies 9 to 64 (EFVHRTWVQCENESCLKWRLLSPAAAAAVNPSEPWYCFMNTDPSYSSCSVSEEDFP). Residues C18, C23, C45, and C56 each coordinate Zn(2+). The PWWP domain occupies 83 to 147 (LGSLVLVKLR…AAFVGHFSLT (65 aa)). The segment at 264–295 (IQEPTAREDESQGEQLSQCSPESPTGSPFQSY) is disordered. Polar residues predominate over residues 276–293 (GEQLSQCSPESPTGSPFQ).

Its function is as follows. Histone methylation reader which binds to non-methylated (H3K4me0), monomethylated (H3K4me1), dimethylated (H3K4me2) and trimethylated (H3K4me3) 'Lys-4' on histone H3. The order of binding preference is H3K4me3 &gt; H3K4me2 &gt; H3K4me1 &gt; H3K4me0. The polypeptide is Zinc finger CW-type PWWP domain protein 2 homolog (Zcwpw2) (Mus musculus (Mouse)).